The chain runs to 363 residues: Protein-glutamate methylesterase/protein-glutamine glutaminase of group 3 operon (363 aa).

The Response regulatory domain occupies 7 to 124 (RVLIVDDSAS…RQALLECSTR (118 aa)). D58 bears the 4-aspartylphosphate mark. The CheB-type methylesterase domain maps to 166–357 (PTTERIVCIG…REIMLWYQAG (192 aa)). Catalysis depends on residues S177, H203, and D299.

This sequence belongs to the CheB family. Post-translationally, phosphorylated by CheA. Phosphorylation of the N-terminal regulatory domain activates the methylesterase activity.

Its subcellular location is the cytoplasm. The enzyme catalyses [protein]-L-glutamate 5-O-methyl ester + H2O = L-glutamyl-[protein] + methanol + H(+). It catalyses the reaction L-glutaminyl-[protein] + H2O = L-glutamyl-[protein] + NH4(+). Involved in chemotaxis. Part of a chemotaxis signal transduction system that modulates chemotaxis in response to various stimuli. Catalyzes the demethylation of specific methylglutamate residues introduced into the chemoreceptors (methyl-accepting chemotaxis proteins or MCP) by CheR. Also mediates the irreversible deamidation of specific glutamine residues to glutamic acid. The polypeptide is Protein-glutamate methylesterase/protein-glutamine glutaminase of group 3 operon (Bradyrhizobium diazoefficiens (strain JCM 10833 / BCRC 13528 / IAM 13628 / NBRC 14792 / USDA 110)).